The primary structure comprises 145 residues: D-aminoacyl-tRNA deacylase (145 aa).

Positions 137 to 138 (GP) match the Gly-cisPro motif, important for rejection of L-amino acids motif.

This sequence belongs to the DTD family. In terms of assembly, homodimer.

The protein localises to the cytoplasm. It carries out the reaction glycyl-tRNA(Ala) + H2O = tRNA(Ala) + glycine + H(+). It catalyses the reaction a D-aminoacyl-tRNA + H2O = a tRNA + a D-alpha-amino acid + H(+). Functionally, an aminoacyl-tRNA editing enzyme that deacylates mischarged D-aminoacyl-tRNAs. Also deacylates mischarged glycyl-tRNA(Ala), protecting cells against glycine mischarging by AlaRS. Acts via tRNA-based rather than protein-based catalysis; rejects L-amino acids rather than detecting D-amino acids in the active site. By recycling D-aminoacyl-tRNA to D-amino acids and free tRNA molecules, this enzyme counteracts the toxicity associated with the formation of D-aminoacyl-tRNA entities in vivo and helps enforce protein L-homochirality. The polypeptide is D-aminoacyl-tRNA deacylase (Pseudomonas syringae pv. syringae (strain B728a)).